Consider the following 176-residue polypeptide: RNA pyrophosphohydrolase (176 aa).

A Nudix hydrolase domain is found at 6–149 (GYRPNVGIVI…KRDVYRRVMK (144 aa)). Residues 38–59 (GGINPGESAEQAMYRELFEEVG) carry the Nudix box motif.

This sequence belongs to the Nudix hydrolase family. RppH subfamily. The cofactor is a divalent metal cation.

Accelerates the degradation of transcripts by removing pyrophosphate from the 5'-end of triphosphorylated RNA, leading to a more labile monophosphorylated state that can stimulate subsequent ribonuclease cleavage. In Escherichia fergusonii (strain ATCC 35469 / DSM 13698 / CCUG 18766 / IAM 14443 / JCM 21226 / LMG 7866 / NBRC 102419 / NCTC 12128 / CDC 0568-73), this protein is RNA pyrophosphohydrolase.